Here is an 82-residue protein sequence, read N- to C-terminus: ATP synthase subunit c, chloroplastic (82 aa).

Position 1 is an N-formylmethionine (M1). The next 2 helical transmembrane spans lie at 3–23 (PIVA…AAIG) and 57–77 (FAFM…LLFA).

This sequence belongs to the ATPase C chain family. In terms of assembly, F-type ATPases have 2 components, F(1) - the catalytic core - and F(0) - the membrane proton channel. F(1) has five subunits: alpha(3), beta(3), gamma(1), delta(1), epsilon(1). F(0) has four main subunits: a(1), b(1), b'(1) and c(10-14). The alpha and beta chains form an alternating ring which encloses part of the gamma chain. F(1) is attached to F(0) by a central stalk formed by the gamma and epsilon chains, while a peripheral stalk is formed by the delta, b and b' chains.

The protein resides in the plastid. It is found in the chloroplast thylakoid membrane. Functionally, f(1)F(0) ATP synthase produces ATP from ADP in the presence of a proton or sodium gradient. F-type ATPases consist of two structural domains, F(1) containing the extramembraneous catalytic core and F(0) containing the membrane proton channel, linked together by a central stalk and a peripheral stalk. During catalysis, ATP synthesis in the catalytic domain of F(1) is coupled via a rotary mechanism of the central stalk subunits to proton translocation. Its function is as follows. Key component of the F(0) channel; it plays a direct role in translocation across the membrane. A homomeric c-ring of between 10-14 subunits forms the central stalk rotor element with the F(1) delta and epsilon subunits. The protein is ATP synthase subunit c, chloroplastic of Chlamydomonas reinhardtii (Chlamydomonas smithii).